The chain runs to 127 residues: Glycine cleavage system H protein (127 aa).

A Lipoyl-binding domain is found at 22–104 (EVVIGITHFA…YEGAWMVKVE (83 aa)). K63 bears the N6-lipoyllysine mark.

This sequence belongs to the GcvH family. As to quaternary structure, the glycine cleavage system is composed of four proteins: P, T, L and H. Requires (R)-lipoate as cofactor.

Its function is as follows. The glycine cleavage system catalyzes the degradation of glycine. The H protein shuttles the methylamine group of glycine from the P protein to the T protein. Functionally, is also involved in protein lipoylation via its role as an octanoyl/lipoyl carrier protein intermediate. This chain is Glycine cleavage system H protein, found in Bacillus cereus (strain ZK / E33L).